Reading from the N-terminus, the 34-residue chain is Crassicorin-II (34 aa).

A disulfide bond links cysteine 6 and cysteine 30.

In terms of tissue distribution, highly expressed by the mesenteries. Moderately expressed by the pharynx. Weakly expressed by the gonad and pedal disk. No expression in tentacle.

The protein resides in the secreted. It is found in the nematocyst. Peptide with both antimicrobial and neurotoxin activities. Cationic AMP with antimicrobial activity against both Gram-positive bacteria (B.subtilis) and Gram-negative bacteria (E.coli and S.enterica). Shows no significant antimicrobial activity against bacteria S.aureus and P.aeruginosa, as well as the fungus C.albicans. In vivo, induces reversible paralytic activity towards the shrimp P.paucidens. May act by impairing sodium or potassium channels in the prey. The protein is Crassicorin-II of Urticina crassicornis (Mottled anemone).